Here is a 149-residue protein sequence, read N- to C-terminus: Cytochrome c-type biogenesis protein CcmE (149 aa).

Over 1–7 (MKARHKR) the chain is Cytoplasmic. Residues 8–28 (LGLIVAGLAALGLGAALVLSA) form a helical; Signal-anchor for type II membrane protein membrane-spanning segment. Topologically, residues 29–149 (FQKNLVFFFT…GAPALAGALK (121 aa)) are periplasmic. Heme contacts are provided by His-123 and Tyr-127.

This sequence belongs to the CcmE/CycJ family.

It is found in the cell inner membrane. Its function is as follows. Heme chaperone required for the biogenesis of c-type cytochromes. Transiently binds heme delivered by CcmC and transfers the heme to apo-cytochromes in a process facilitated by CcmF and CcmH. The protein is Cytochrome c-type biogenesis protein CcmE of Polaromonas naphthalenivorans (strain CJ2).